Here is a 122-residue protein sequence, read N- to C-terminus: Large ribosomal subunit protein uL14 (122 aa).

Belongs to the universal ribosomal protein uL14 family. Part of the 50S ribosomal subunit. Forms a cluster with proteins L3 and L19. In the 70S ribosome, L14 and L19 interact and together make contacts with the 16S rRNA in bridges B5 and B8.

In terms of biological role, binds to 23S rRNA. Forms part of two intersubunit bridges in the 70S ribosome. In Helicobacter acinonychis (strain Sheeba), this protein is Large ribosomal subunit protein uL14.